The sequence spans 652 residues: Sodium-dependent phosphate transporter 2 (652 aa).

At 1-5 the chain is on the extracellular side; sequence MAMDE. Residues 6-26 form a helical membrane-spanning segment; sequence YLWMVILGFIIAFILAFSVGA. The Cytoplasmic portion of the chain corresponds to 27–46; sequence NDVANSFGTAVGSGVVTLRQ. The helical transmembrane segment at 47-67 threads the bilayer; sequence ACILASIFETTGSVLLGAKVG. Over 68–86 the chain is Extracellular; that stretch reads ETIRKGIIDVNLYNETVET. The N-linked (GlcNAc...) asparagine glycan is linked to N81. A helical transmembrane segment spans residues 87 to 107; the sequence is LMAGEVSAMVGSAVWQLIASF. Residues 108–109 lie on the Cytoplasmic side of the membrane; that stretch reads LR. Residues 110–130 form a helical membrane-spanning segment; the sequence is LPISGTHCIVGSTIGFSLVAI. Residues 131-142 lie on the Extracellular side of the membrane; it reads GTKGVQWMELVK. A helical transmembrane segment spans residues 143-163; sequence IVASWFISPLLSGFMSGLLFV. Topologically, residues 164–190 are cytoplasmic; it reads LIRIFILKKEDPVPNGLRALPVFYAAT. A helical transmembrane segment spans residues 191–211; sequence IAINVFSIMYTGAPVLGLVLP. Residues 212–213 are Extracellular-facing; it reads MW. Residues 214–234 form a helical membrane-spanning segment; the sequence is AIALISFGVALLFAFFVWLFV. Topologically, residues 235 to 482 are cytoplasmic; that stretch reads CPWMRRKITG…EEKEEKDAPE (248 aa). Residues S253, S256, S259, and S268 each carry the phosphoserine modification. Residues 273–307 are disordered; sequence ELPGAKANDDSTIPLTGAAGETLGTSEGTSAGSHP. A compositionally biased stretch (polar residues) spans 295-304; that stretch reads LGTSEGTSAG. A phosphoserine mark is found at S316 and S385. The interval 458 to 477 is disordered; that stretch reads SELADPDQPREDPAEEEKEE. The helical transmembrane segment at 483–503 threads the bilayer; the sequence is VHLLFHFLQVLTACFGSFAHG. Topologically, residues 504–530 are extracellular; the sequence is GNDVSNAIGPLVALWLIYKQGGVTQEA. A helical transmembrane segment spans residues 531-551; that stretch reads ATPVWLLFYGGVGICTGLWVW. The Cytoplasmic segment spans residues 552 to 571; that stretch reads GRRVIQTMGKDLTPITPSSG. The helical transmembrane segment at 572-586 threads the bilayer; sequence FTIELASAFTVVIAS. Residues 587-593 lie on the Extracellular side of the membrane; the sequence is NIGLPVS. A helical transmembrane segment spans residues 594–609; the sequence is TTHCKVGSVVAVGWIR. The Cytoplasmic portion of the chain corresponds to 610–621; that stretch reads SRKAVDWRLFRN. A helical transmembrane segment spans residues 622-642; sequence IFVAWFVTVPVAGLFSAAVMA. Residues 643–652 are Extracellular-facing; the sequence is LLMYGILPYV.

It belongs to the inorganic phosphate transporter (PiT) (TC 2.A.20) family. As to quaternary structure, homodimer. As to expression, ubiquitously expressed.

The protein localises to the cell membrane. Its subcellular location is the apical cell membrane. It carries out the reaction 2 Na(+)(out) + phosphate(out) = 2 Na(+)(in) + phosphate(in). Its function is as follows. Sodium-phosphate symporter which preferentially transports the monovalent form of phosphate with a stoichiometry of two sodium ions per phosphate ion. Plays a critical role in the determination of bone quality and strength by providing phosphate for bone mineralization. Required to maintain normal cerebrospinal fluid phosphate levels. Mediates phosphate-induced calcification of vascular smooth muscle cells (VCMCs) and can functionally compensate for loss of SLC20A1 in VCMCs. Functionally, (Microbial infection) Functions as a retroviral receptor and confers human cells susceptibility to infection to amphotropic murine leukemia virus (A-MuLV), 10A1 murine leukemia virus (10A1 MLV) and some feline leukemia virus subgroup B (FeLV-B) variants. This is Sodium-dependent phosphate transporter 2 (SLC20A2) from Homo sapiens (Human).